The primary structure comprises 113 residues: Hydrogenase maturation factor HypA (113 aa).

His-2 is a binding site for Ni(2+). Residues Cys-70, Cys-73, Cys-86, and Cys-88 each contribute to the Zn(2+) site.

This sequence belongs to the HypA/HybF family.

In terms of biological role, involved in the maturation of [NiFe] hydrogenases. Required for nickel insertion into the metal center of the hydrogenase. The sequence is that of Hydrogenase maturation factor HypA from Nostoc punctiforme (strain ATCC 29133 / PCC 73102).